The chain runs to 288 residues: AA9 family lytic polysaccharide monooxygenase A (288 aa).

Residues 1–22 (MKSTSATKFSVLAAATFAAAHG) form the signal peptide. Cu(2+)-binding residues include His21 and His104. 2 disulfides stabilise this stretch: Cys74/Cys191 and Cys115/Cys119. Asn151 is a glycosylation site (N-linked (GlcNAc...) asparagine). 2 residues coordinate O2: His177 and Gln186. Tyr188 provides a ligand contact to Cu(2+). The disordered stretch occupies residues 236–270 (PEPYKSGSGSSDNAAEAVSSAAAEEPAAAATSAAA). Over residues 249 to 270 (AAEAVSSAAAEEPAAAATSAAA) the composition is skewed to low complexity.

The protein belongs to the polysaccharide monooxygenase AA9 family. It depends on Cu(2+) as a cofactor.

It is found in the secreted. It catalyses the reaction [(1-&gt;4)-beta-D-glucosyl]n+m + reduced acceptor + O2 = 4-dehydro-beta-D-glucosyl-[(1-&gt;4)-beta-D-glucosyl]n-1 + [(1-&gt;4)-beta-D-glucosyl]m + acceptor + H2O.. Lytic polysaccharide monooxygenase (LPMO) that depolymerizes crystalline and amorphous polysaccharides via the oxidation of scissile alpha- or beta-(1-4)-glycosidic bonds, yielding C1 and C4 oxidation products. Catalysis by LPMOs requires the reduction of the active-site copper from Cu(II) to Cu(I) by a reducing agent and H(2)O(2) or O(2) as a cosubstrate. Active on cellulose and on xyloglucan for deconstruction of plant biomass. The protein is AA9 family lytic polysaccharide monooxygenase A of Geotrichum candidum (Oospora lactis).